The primary structure comprises 148 residues: MGLEKSLLLLPLLVLVLGCVQPSLGKESSAMKFERQHMDSEGTGSSPTYCNQMMKRREMTKGSCKPVNTFVHEPLADVQAVCSQEKVTCKNGKSNCYKSSSALHITDCHLKGNSKYPNCDYKTSNYQKHIIVACEGNPYVPVHFDASV.

An N-terminal signal peptide occupies residues 1-25 (MGLEKSLLLLPLLVLVLGCVQPSLG). Substrate-binding residues include lysine 32 and arginine 35. The active-site Proton acceptor is the histidine 37. Intrachain disulfides connect cysteine 50/cysteine 108, cysteine 64/cysteine 119, cysteine 82/cysteine 134, and cysteine 89/cysteine 96. Substrate is bound by residues 65–69 (KPVNT) and lysine 90. Residue histidine 143 is the Proton donor of the active site.

This sequence belongs to the pancreatic ribonuclease family. In terms of assembly, monomer. Interacts with and forms tight 1:1 complexes with RNH1. Dimerization of two such complexes may occur. Interaction with RNH1 inhibits this protein. As to expression, pancreas.

Its subcellular location is the secreted. It catalyses the reaction an [RNA] containing cytidine + H2O = an [RNA]-3'-cytidine-3'-phosphate + a 5'-hydroxy-ribonucleotide-3'-[RNA].. The catalysed reaction is an [RNA] containing uridine + H2O = an [RNA]-3'-uridine-3'-phosphate + a 5'-hydroxy-ribonucleotide-3'-[RNA].. Endonuclease that catalyzes the cleavage of RNA on the 3' side of pyrimidine nucleotides. Acts on single-stranded and double-stranded RNA. The protein is Ribonuclease pancreatic (RNASE1) of Gerbillus nigeriae (Nigerian gerbil).